The following is a 180-amino-acid chain: Crossover junction endodeoxyribonuclease RuvC (180 aa).

Active-site residues include Asp-7, Glu-66, and Asp-138. Mg(2+)-binding residues include Asp-7, Glu-66, and Asp-138.

It belongs to the RuvC family. Homodimer which binds Holliday junction (HJ) DNA. The HJ becomes 2-fold symmetrical on binding to RuvC with unstacked arms; it has a different conformation from HJ DNA in complex with RuvA. In the full resolvosome a probable DNA-RuvA(4)-RuvB(12)-RuvC(2) complex forms which resolves the HJ. Mg(2+) is required as a cofactor.

Its subcellular location is the cytoplasm. It catalyses the reaction Endonucleolytic cleavage at a junction such as a reciprocal single-stranded crossover between two homologous DNA duplexes (Holliday junction).. In terms of biological role, the RuvA-RuvB-RuvC complex processes Holliday junction (HJ) DNA during genetic recombination and DNA repair. Endonuclease that resolves HJ intermediates. Cleaves cruciform DNA by making single-stranded nicks across the HJ at symmetrical positions within the homologous arms, yielding a 5'-phosphate and a 3'-hydroxyl group; requires a central core of homology in the junction. The consensus cleavage sequence is 5'-(A/T)TT(C/G)-3'. Cleavage occurs on the 3'-side of the TT dinucleotide at the point of strand exchange. HJ branch migration catalyzed by RuvA-RuvB allows RuvC to scan DNA until it finds its consensus sequence, where it cleaves and resolves the cruciform DNA. The sequence is that of Crossover junction endodeoxyribonuclease RuvC from Burkholderia multivorans (strain ATCC 17616 / 249).